The primary structure comprises 178 residues: Large ribosomal subunit protein uL10 (178 aa).

Belongs to the universal ribosomal protein uL10 family. As to quaternary structure, part of the ribosomal stalk of the 50S ribosomal subunit. The N-terminus interacts with L11 and the large rRNA to form the base of the stalk. The C-terminus forms an elongated spine to which L12 dimers bind in a sequential fashion forming a multimeric L10(L12)X complex.

Functionally, forms part of the ribosomal stalk, playing a central role in the interaction of the ribosome with GTP-bound translation factors. In Mycobacterium tuberculosis (strain ATCC 25177 / H37Ra), this protein is Large ribosomal subunit protein uL10.